Consider the following 491-residue polypeptide: Glutamyl-tRNA(Gln) amidotransferase subunit A (491 aa).

Catalysis depends on charge relay system residues Lys-77 and Ser-152. The active-site Acyl-ester intermediate is Ser-176.

This sequence belongs to the amidase family. GatA subfamily. As to quaternary structure, heterotrimer of A, B and C subunits.

It carries out the reaction L-glutamyl-tRNA(Gln) + L-glutamine + ATP + H2O = L-glutaminyl-tRNA(Gln) + L-glutamate + ADP + phosphate + H(+). Functionally, allows the formation of correctly charged Gln-tRNA(Gln) through the transamidation of misacylated Glu-tRNA(Gln) in organisms which lack glutaminyl-tRNA synthetase. The reaction takes place in the presence of glutamine and ATP through an activated gamma-phospho-Glu-tRNA(Gln). This Chlamydia felis (strain Fe/C-56) (Chlamydophila felis) protein is Glutamyl-tRNA(Gln) amidotransferase subunit A.